The following is a 151-amino-acid chain: MKPAARRNARHFAIQAIYSWQITKGNVAEIEQQFLSDDKFEEEEHQADAPILAAPHTDLNYFHDLLNGVVQNHQELDSKMRPYLSRPLQDLDQMELALLRLAMYEMTKREDVPYKVVINEAIELAKIFGAEDSHKFVNGVLDKAAPTLRKK.

It belongs to the NusB family.

Involved in transcription antitermination. Required for transcription of ribosomal RNA (rRNA) genes. Binds specifically to the boxA antiterminator sequence of the ribosomal RNA (rrn) operons. The protein is Transcription antitermination protein NusB of Photobacterium profundum (strain SS9).